The chain runs to 548 residues: Mannosyltransferase APTG1 (548 aa).

A disordered region spans residues 1-23 (MDIRKRKNAGGDGDGGADGASVN). Helical transmembrane passes span 41–61 (IFLF…TYFN), 98–118 (LFAF…YIMI), and 146–166 (GNVA…FFCL). N167 is a glycosylation site (N-linked (GlcNAc...) asparagine). A run of 7 helical transmembrane segments spans residues 169–189 (TFSN…WPCI), 204–224 (LVIA…WLYV), 238–258 (FIIL…CLLD), 260–280 (LMYG…FLSS), 294–314 (FTQG…AGII), 320–340 (KLSA…HKEF), and 342–362 (FVLP…AQME). An N-linked (GlcNAc...) asparagine glycan is attached at N382. Residues 392 to 412 (LSVYFLLATNIPMALYMSLFH) form a helical membrane-spanning segment. N490 carries N-linked (GlcNAc...) asparagine glycosylation.

The protein belongs to the glycosyltransferase 22 family. In terms of tissue distribution, mostly expressed, mainly in vascular tissues, in leaves, roots, stems, flowers, siliques and pollen, and, to a lower extent, in seedlings.

It is found in the endoplasmic reticulum membrane. Mannosyltransferase involved in glycosylphosphatidylinositol-anchor biosynthesis. Required for the pollen tube micropylar guidance and embryo development by regulating GPI-anchor mediated protein localization (e.g. COBL10 and A36). In Arabidopsis thaliana (Mouse-ear cress), this protein is Mannosyltransferase APTG1.